The chain runs to 497 residues: Probable malate:quinone oxidoreductase (497 aa).

Belongs to the MQO family. Requires FAD as cofactor.

It carries out the reaction (S)-malate + a quinone = a quinol + oxaloacetate. It participates in carbohydrate metabolism; tricarboxylic acid cycle; oxaloacetate from (S)-malate (quinone route): step 1/1. The sequence is that of Probable malate:quinone oxidoreductase from Wolinella succinogenes (strain ATCC 29543 / DSM 1740 / CCUG 13145 / JCM 31913 / LMG 7466 / NCTC 11488 / FDC 602W) (Vibrio succinogenes).